The chain runs to 338 residues: Methionine import ATP-binding protein MetN 2 (338 aa).

In terms of domain architecture, ABC transporter spans I2–V242. G39–S46 is a binding site for ATP.

Belongs to the ABC transporter superfamily. Methionine importer (TC 3.A.1.24) family. The complex is composed of two ATP-binding proteins (MetN), two transmembrane proteins (MetI) and a solute-binding protein (MetQ).

Its subcellular location is the cell inner membrane. The catalysed reaction is L-methionine(out) + ATP + H2O = L-methionine(in) + ADP + phosphate + H(+). The enzyme catalyses D-methionine(out) + ATP + H2O = D-methionine(in) + ADP + phosphate + H(+). Its function is as follows. Part of the ABC transporter complex MetNIQ involved in methionine import. Responsible for energy coupling to the transport system. The protein is Methionine import ATP-binding protein MetN 2 of Salmonella choleraesuis (strain SC-B67).